The primary structure comprises 147 residues: Prefoldin subunit alpha 2 (147 aa).

The protein belongs to the prefoldin subunit alpha family. Heterohexamer of two alpha and four beta subunits.

The protein localises to the cytoplasm. Molecular chaperone capable of stabilizing a range of proteins. Seems to fulfill an ATP-independent, HSP70-like function in archaeal de novo protein folding. This is Prefoldin subunit alpha 2 (pfdA2) from Methanocaldococcus jannaschii (strain ATCC 43067 / DSM 2661 / JAL-1 / JCM 10045 / NBRC 100440) (Methanococcus jannaschii).